Here is a 128-residue protein sequence, read N- to C-terminus: Glycine cleavage system H protein (128 aa).

One can recognise a Lipoyl-binding domain in the interval 22 to 104; sequence VATVGITEHA…YGEGWIFKMK (83 aa). N6-lipoyllysine is present on K63.

The protein belongs to the GcvH family. The glycine cleavage system is composed of four proteins: P, T, L and H. It depends on (R)-lipoate as a cofactor.

In terms of biological role, the glycine cleavage system catalyzes the degradation of glycine. The H protein shuttles the methylamine group of glycine from the P protein to the T protein. The sequence is that of Glycine cleavage system H protein from Methylacidiphilum infernorum (isolate V4) (Methylokorus infernorum (strain V4)).